The chain runs to 397 residues: Elongation factor Tu (397 aa).

Positions 10-206 (KPHVNIGTIG…AVDENVPDPE (197 aa)) constitute a tr-type G domain. A G1 region spans residues 19 to 26 (GHVDHGKT). Residue 19–26 (GHVDHGKT) coordinates GTP. A Mg(2+)-binding site is contributed by Thr-26. Residues 62–66 (GITIQ) form a G2 region. Residues 83–86 (DAPG) are G3. Residues 83 to 87 (DAPGH) and 138 to 141 (NKAD) each bind GTP. The segment at 138–141 (NKAD) is G4. The interval 176–178 (SAL) is G5.

Belongs to the TRAFAC class translation factor GTPase superfamily. Classic translation factor GTPase family. EF-Tu/EF-1A subfamily. Monomer.

Its subcellular location is the cytoplasm. It carries out the reaction GTP + H2O = GDP + phosphate + H(+). GTP hydrolase that promotes the GTP-dependent binding of aminoacyl-tRNA to the A-site of ribosomes during protein biosynthesis. This chain is Elongation factor Tu, found in Saccharopolyspora erythraea (strain ATCC 11635 / DSM 40517 / JCM 4748 / NBRC 13426 / NCIMB 8594 / NRRL 2338).